A 152-amino-acid polypeptide reads, in one-letter code: Acidic phospholipase A2 S16-19 (152 aa).

A signal peptide spans 1 to 19 (MYPAHLLVLLAVCVSLLGA). The propeptide occupies 20 to 27 (SNIPLPSL). 6 disulfide bridges follow: Cys38/Cys104, Cys54/Cys151, Cys71/Cys132, Cys78/Cys125, Cys88/Cys118, and Cys111/Cys123. Tyr55, Gly57, and Gly59 together coordinate Ca(2+). The active site involves His75. Asp76 lines the Ca(2+) pocket. Residue Asp126 is part of the active site.

This sequence belongs to the phospholipase A2 family. Group I subfamily. D49 sub-subfamily. The cofactor is Ca(2+). Post-translationally, this enzyme lacks one of the seven disulfide bonds found in similar PLA2 proteins. Expressed by the venom gland.

The protein resides in the secreted. It catalyses the reaction a 1,2-diacyl-sn-glycero-3-phosphocholine + H2O = a 1-acyl-sn-glycero-3-phosphocholine + a fatty acid + H(+). Snake venom phospholipase A2 (PLA2) that inhibits collagen-induced platelet aggregation. PLA2 catalyzes the calcium-dependent hydrolysis of the 2-acyl groups in 3-sn-phosphoglycerides. The sequence is that of Acidic phospholipase A2 S16-19 from Austrelaps superbus (Lowland copperhead snake).